The following is a 347-amino-acid chain: Protein RecA (347 aa).

Position 65-72 (65-72) interacts with ATP; the sequence is GPESSGKT. Residues 327 to 336 show a composition bias toward basic and acidic residues; it reads KFEPTELSRE. The disordered stretch occupies residues 327 to 347; the sequence is KFEPTELSREEGDEDTLEDAM. Over residues 337-347 the composition is skewed to acidic residues; the sequence is EGDEDTLEDAM.

This sequence belongs to the RecA family.

The protein resides in the cytoplasm. Functionally, can catalyze the hydrolysis of ATP in the presence of single-stranded DNA, the ATP-dependent uptake of single-stranded DNA by duplex DNA, and the ATP-dependent hybridization of homologous single-stranded DNAs. It interacts with LexA causing its activation and leading to its autocatalytic cleavage. This Xylella fastidiosa (strain M23) protein is Protein RecA.